Reading from the N-terminus, the 60-residue chain is Large ribosomal subunit protein bL32 (60 aa).

The tract at residues 1 to 21 is disordered; sequence MAVPARHTSKAKKNKRRTHYK. Positions 7–20 are enriched in basic residues; sequence HTSKAKKNKRRTHY.

Belongs to the bacterial ribosomal protein bL32 family.

The protein is Large ribosomal subunit protein bL32 of Streptococcus equi subsp. zooepidemicus (strain H70).